The following is a 1318-amino-acid chain: DNA-directed RNA polymerase subunit beta' (1318 aa).

The Zn(2+) site is built by cysteine 221, cysteine 295, cysteine 302, and cysteine 305.

This sequence belongs to the RNA polymerase beta' chain family. RpoC2 subfamily. In cyanobacteria the RNAP catalytic core is composed of 2 alpha, 1 beta, 1 beta', 1 gamma and 1 omega subunit. When a sigma factor is associated with the core the holoenzyme is formed, which can initiate transcription. The cofactor is Zn(2+).

The enzyme catalyses RNA(n) + a ribonucleoside 5'-triphosphate = RNA(n+1) + diphosphate. DNA-dependent RNA polymerase catalyzes the transcription of DNA into RNA using the four ribonucleoside triphosphates as substrates. The sequence is that of DNA-directed RNA polymerase subunit beta' from Synechococcus sp. (strain ATCC 27144 / PCC 6301 / SAUG 1402/1) (Anacystis nidulans).